Reading from the N-terminus, the 563-residue chain is MAFPEYSPAASAATFADLQIHPRVLRAIGDVGYESPTAIQAATIPALMAGSDVVGLAQTGTGKTAAFAIPMLSKIDITSKVPQALVLVPTRELALQVAEAFGRYGAYLSQLNVLPIYGGSSYAVQLAGLRRGAQVVVGTPGRMIDHLERATLDLSRVDFLVLDEADEMLTMGFADDVERILSETPEYKQVALFSATMPPAIRKLSAKYLHDPFEVTCKAKTAVAENISQSYIQVARKMDALTRVLEVEPFEAMIVFVRTKQATEEIAEKLRARGFSAAAISGDVPQAQRERTITALRDGDIDILVATDVAARGLDVERISHVLNYDIPHDTESYVHRIGRTGRAGRSGAALIFVSPRELHLLKAIEKATRQTLTEAQLPTVEDVNTQRVAKFADSITNALGGPGIELFRRLVEEYEREHDVPMADIAAALAVQCRGGEAFLMAPDPPLSRRNRDQRRDRPQRPKRRPDLTTYRVAVGKRHKIGPGAIVGAIANEGGLHRSDFGQIRIGPDFSLVELPAKLPRATLKKLAQTRISGVLIDLRPYRPPDAARRHNGGKPRRKHVG.

The Q motif motif lies at 13 to 41; that stretch reads ATFADLQIHPRVLRAIGDVGYESPTAIQA. A Helicase ATP-binding domain is found at 44 to 215; it reads IPALMAGSDV…AKYLHDPFEV (172 aa). 57–64 contacts ATP; the sequence is AQTGTGKT. The short motif at 163–166 is the DEAD box element; it reads DEAD. The Helicase C-terminal domain maps to 226 to 385; sequence NISQSYIQVA…AQLPTVEDVN (160 aa). 2 disordered regions span residues 441 to 470 and 543 to 563; these read LMAP…PDLT and YRPP…KHVG. A compositionally biased stretch (basic and acidic residues) spans 451 to 461; the sequence is RNRDQRRDRPQ. A compositionally biased stretch (basic residues) spans 551–563; that stretch reads RHNGGKPRRKHVG.

This sequence belongs to the DEAD box helicase family. DeaD/CsdA subfamily.

It localises to the cytoplasm. The enzyme catalyses ATP + H2O = ADP + phosphate + H(+). In terms of biological role, DEAD-box RNA helicase involved in various cellular processes at low temperature, including ribosome biogenesis, mRNA degradation and translation initiation. The protein is ATP-dependent RNA helicase DeaD of Mycobacterium tuberculosis (strain CDC 1551 / Oshkosh).